A 339-amino-acid chain; its full sequence is MITVLRINHRPYRDKRITTHVALTARAFGASAILVDERDETLENTIRGVISNFGGSFSIKTGCNWIQEFKHFQGIRVHLTMYGRRINDVIDEIRNSGKDVMVLVGSEKVPIEAYEIADYNVSVTNQPISEVSALAIFLDRYFQGKEFEFEFRGRINVQPAERGKIVKIIPDEIECLDLLKKYGASEQLIEHVKAVEGLALKIAERCNADKRVIVAGSLLHDIGRTRTNGIDHAVAGAEILRSENIHDSVVSAVERHIGAGITREEAARLGLPEKDYVPETLEEMIVAQADNLFAGNKRLRLEEVLNIYRKRGLDSAAERIKELHRRISAIAGIDIDEIR.

S-adenosyl-L-methionine contacts are provided by residues Leu79 and 105-109 (GSEKV). The region spanning 188-295 (LIEHVKAVEG…VAQADNLFAG (108 aa)) is the HD domain.

It belongs to the aTrm56 family. In terms of assembly, homodimer.

The protein localises to the cytoplasm. It carries out the reaction cytidine(56) in tRNA + S-adenosyl-L-methionine = 2'-O-methylcytidine(56) in tRNA + S-adenosyl-L-homocysteine + H(+). In terms of biological role, specifically catalyzes the AdoMet-dependent 2'-O-ribose methylation of cytidine at position 56 in tRNAs. The polypeptide is tRNA (cytidine(56)-2'-O)-methyltransferase (Thermoplasma acidophilum (strain ATCC 25905 / DSM 1728 / JCM 9062 / NBRC 15155 / AMRC-C165)).